A 146-amino-acid polypeptide reads, in one-letter code: ATP synthase epsilon chain (146 aa).

The interval 102 to 122 (QSAKKRAEQHMQEAKEKHNER) is disordered.

This sequence belongs to the ATPase epsilon chain family. As to quaternary structure, F-type ATPases have 2 components, CF(1) - the catalytic core - and CF(0) - the membrane proton channel. CF(1) has five subunits: alpha(3), beta(3), gamma(1), delta(1), epsilon(1). CF(0) has three main subunits: a, b and c.

It localises to the cell membrane. In terms of biological role, produces ATP from ADP in the presence of a proton gradient across the membrane. The polypeptide is ATP synthase epsilon chain (Lactobacillus gasseri (strain ATCC 33323 / DSM 20243 / BCRC 14619 / CIP 102991 / JCM 1131 / KCTC 3163 / NCIMB 11718 / NCTC 13722 / AM63)).